We begin with the raw amino-acid sequence, 641 residues long: MAKIIGIDLGTTNSCVAILEGGKPRVIENSEGARTTPSIVAFTADNEVLVGQSAKRQAITNPKNTLFAIKRLIGRRYKDDVVQKDIKMVPYTIVEAENGDAWVEVGGKKMAPPEISARVLMKLKKDAEAYLGEEVKEAVITVPAYFNDSQRQATKDAGRIAGLDVKRIINEPTAAALAYGMDKSRGDQKIAVYDLGGGTFDISIIEIAEVDGEHQFEVLSTNGDTFLGGEDFDLRIIEYIVDEFRKEQGIDLHNDPLALQRLKESAEKAKIELSSSQQTEINLPYITADATGPKHLNVKLTRAKLEALVEDLILRTRGPCETALKDAGLKSADIDEVILVGGQTRMPKVQEFVKEIFGREPRKDVNPDEAVAVGAAIQAGVLGGQVKDVLLLDVTPLSLGIETLGGVMTKLIEKNTTIPTKATQVFSTAEDNQTAVTIHVLQGEREMARDNKSLGRFDLSDIPMAPRGVPQIEVTFDIDANGILNVSAKDKATGKQQSIVIRASSGLSEDEIKRMVKDAELHAEEDRRMHELVSARNHADAVVHATNKTLAELGDKVSGEERAKIEAALNDLKDAMGGDNKDLIEQRTSALTELSGKLAERLYTQQGGTAGSETHSHEKAGGSGGDDVVDAEFEEVRDDKR.

At Thr-199 the chain carries Phosphothreonine; by autocatalysis. Positions 603–613 (YTQQGGTAGSE) are enriched in polar residues. Positions 603-641 (YTQQGGTAGSETHSHEKAGGSGGDDVVDAEFEEVRDDKR) are disordered. The segment covering 627 to 641 (DVVDAEFEEVRDDKR) has biased composition (acidic residues).

The protein belongs to the heat shock protein 70 family.

In terms of biological role, acts as a chaperone. The sequence is that of Chaperone protein DnaK from Methylococcus capsulatus (strain ATCC 33009 / NCIMB 11132 / Bath).